The following is a 378-amino-acid chain: UDP-N-acetylglucosamine--N-acetylmuramyl-(pentapeptide) pyrophosphoryl-undecaprenol N-acetylglucosamine transferase (378 aa).

Residues 13–15 (TGG), Asn124, Arg165, Ser193, and Gln294 each bind UDP-N-acetyl-alpha-D-glucosamine.

It belongs to the glycosyltransferase 28 family. MurG subfamily.

Its subcellular location is the cell inner membrane. It carries out the reaction di-trans,octa-cis-undecaprenyl diphospho-N-acetyl-alpha-D-muramoyl-L-alanyl-D-glutamyl-meso-2,6-diaminopimeloyl-D-alanyl-D-alanine + UDP-N-acetyl-alpha-D-glucosamine = di-trans,octa-cis-undecaprenyl diphospho-[N-acetyl-alpha-D-glucosaminyl-(1-&gt;4)]-N-acetyl-alpha-D-muramoyl-L-alanyl-D-glutamyl-meso-2,6-diaminopimeloyl-D-alanyl-D-alanine + UDP + H(+). It participates in cell wall biogenesis; peptidoglycan biosynthesis. In terms of biological role, cell wall formation. Catalyzes the transfer of a GlcNAc subunit on undecaprenyl-pyrophosphoryl-MurNAc-pentapeptide (lipid intermediate I) to form undecaprenyl-pyrophosphoryl-MurNAc-(pentapeptide)GlcNAc (lipid intermediate II). The sequence is that of UDP-N-acetylglucosamine--N-acetylmuramyl-(pentapeptide) pyrophosphoryl-undecaprenol N-acetylglucosamine transferase from Agrobacterium fabrum (strain C58 / ATCC 33970) (Agrobacterium tumefaciens (strain C58)).